Here is a 756-residue protein sequence, read N- to C-terminus: Centromere protein I (756 aa).

The tract at residues 1–60 is disordered; sequence MSPQKRVKNVQAQNRTSQGSSSFQTTLSAWKVKQDPSNSKNISKHGQNNPVGDYEHADDQ. Polar residues-rich tracts occupy residues 10–28 and 35–50; these read VQAQNRTSQGSSSFQTTLS and DPSNSKNISKHGQNNP.

This sequence belongs to the CENP-I/CTF3 family. Component of the CENPA-CAD complex, composed of CENPI, CENPK, CENPL, CENPO, CENPP, CENPQ, CENPR and CENPS. The CENPA-CAD complex interacts with the CENPA-NAC complex, at least composed of CENPA, CENPC, CENPH, CENPM, CENPN, CENPT and CENPU. Interacts with SENP6. Sumoylated. Sumoylated form can be polyubiquitinated by RNF4, leading to its degradation. Desumoylation by SENP6 prevents its degradation.

It is found in the nucleus. It localises to the chromosome. The protein localises to the centromere. Component of the CENPA-CAD (nucleosome distal) complex, a complex recruited to centromeres which is involved in assembly of kinetochore proteins, mitotic progression and chromosome segregation. May be involved in incorporation of newly synthesized CENPA into centromeres via its interaction with the CENPA-NAC complex. Required for the localization of CENPF, MAD1L1 and MAD2 (MAD2L1 or MAD2L2) to kinetochores. Involved in the response of gonadal tissues to follicle-stimulating hormone. This Homo sapiens (Human) protein is Centromere protein I (CENPI).